Reading from the N-terminus, the 194-residue chain is 3-isopropylmalate dehydratase small subunit (194 aa).

It belongs to the LeuD family. LeuD type 1 subfamily. As to quaternary structure, heterodimer of LeuC and LeuD.

It catalyses the reaction (2R,3S)-3-isopropylmalate = (2S)-2-isopropylmalate. The protein operates within amino-acid biosynthesis; L-leucine biosynthesis; L-leucine from 3-methyl-2-oxobutanoate: step 2/4. Functionally, catalyzes the isomerization between 2-isopropylmalate and 3-isopropylmalate, via the formation of 2-isopropylmaleate. This is 3-isopropylmalate dehydratase small subunit from Leuconostoc mesenteroides subsp. mesenteroides (strain ATCC 8293 / DSM 20343 / BCRC 11652 / CCM 1803 / JCM 6124 / NCDO 523 / NBRC 100496 / NCIMB 8023 / NCTC 12954 / NRRL B-1118 / 37Y).